The chain runs to 148 residues: Cysteine-rich venom protein VAR6 (148 aa).

Residues 1–22 form the signal peptide; that stretch reads MILLKLYLTLAAILCQSRGTTS. Positions 41–140 constitute an SCP domain; that stretch reads NKHNDLRRTV…AGVMVGHYTQ (100 aa).

It belongs to the CRISP family. Contains 8 disulfide bonds. Expressed by the venom gland.

The protein resides in the secreted. Its function is as follows. Blocks ryanodine receptors, and potassium channels. This is Cysteine-rich venom protein VAR6 from Varanus acanthurus (Ridge-tailed monitor).